Here is a 241-residue protein sequence, read N- to C-terminus: 2,3,4,5-tetrahydropyridine-2,6-dicarboxylate N-acetyltransferase (241 aa).

It belongs to the transferase hexapeptide repeat family. DapH subfamily.

It carries out the reaction (S)-2,3,4,5-tetrahydrodipicolinate + acetyl-CoA + H2O = L-2-acetamido-6-oxoheptanedioate + CoA. Its pathway is amino-acid biosynthesis; L-lysine biosynthesis via DAP pathway; LL-2,6-diaminopimelate from (S)-tetrahydrodipicolinate (acetylase route): step 1/3. Its function is as follows. Catalyzes the transfer of an acetyl group from acetyl-CoA to tetrahydrodipicolinate. The sequence is that of 2,3,4,5-tetrahydropyridine-2,6-dicarboxylate N-acetyltransferase from Caldanaerobacter subterraneus subsp. tengcongensis (strain DSM 15242 / JCM 11007 / NBRC 100824 / MB4) (Thermoanaerobacter tengcongensis).